The following is a 379-amino-acid chain: Queuine tRNA-ribosyltransferase (379 aa).

D94 (proton acceptor) is an active-site residue. Substrate-binding positions include 94–98, D148, Q191, and G218; that span reads DSGGF. An RNA binding region spans residues 249–255; that stretch reads GVGSPDS. Residue D268 is the Nucleophile of the active site. The segment at 273 to 277 is RNA binding; important for wobble base 34 recognition; it reads TRIAR. Zn(2+) is bound by residues C306, C308, C311, and H337.

This sequence belongs to the queuine tRNA-ribosyltransferase family. In terms of assembly, homodimer. Within each dimer, one monomer is responsible for RNA recognition and catalysis, while the other monomer binds to the replacement base PreQ1. Zn(2+) serves as cofactor.

It carries out the reaction 7-aminomethyl-7-carbaguanine + guanosine(34) in tRNA = 7-aminomethyl-7-carbaguanosine(34) in tRNA + guanine. Its pathway is tRNA modification; tRNA-queuosine biosynthesis. In terms of biological role, catalyzes the base-exchange of a guanine (G) residue with the queuine precursor 7-aminomethyl-7-deazaguanine (PreQ1) at position 34 (anticodon wobble position) in tRNAs with GU(N) anticodons (tRNA-Asp, -Asn, -His and -Tyr). Catalysis occurs through a double-displacement mechanism. The nucleophile active site attacks the C1' of nucleotide 34 to detach the guanine base from the RNA, forming a covalent enzyme-RNA intermediate. The proton acceptor active site deprotonates the incoming PreQ1, allowing a nucleophilic attack on the C1' of the ribose to form the product. After dissociation, two additional enzymatic reactions on the tRNA convert PreQ1 to queuine (Q), resulting in the hypermodified nucleoside queuosine (7-(((4,5-cis-dihydroxy-2-cyclopenten-1-yl)amino)methyl)-7-deazaguanosine). In Bacillus anthracis (strain CDC 684 / NRRL 3495), this protein is Queuine tRNA-ribosyltransferase.